The chain runs to 458 residues: UDP-N-acetylmuramate--L-alanine ligase (458 aa).

Residue 112–118 (GMHGKTT) participates in ATP binding.

Belongs to the MurCDEF family.

The protein localises to the cytoplasm. The catalysed reaction is UDP-N-acetyl-alpha-D-muramate + L-alanine + ATP = UDP-N-acetyl-alpha-D-muramoyl-L-alanine + ADP + phosphate + H(+). Its pathway is cell wall biogenesis; peptidoglycan biosynthesis. Cell wall formation. In Acidobacterium capsulatum (strain ATCC 51196 / DSM 11244 / BCRC 80197 / JCM 7670 / NBRC 15755 / NCIMB 13165 / 161), this protein is UDP-N-acetylmuramate--L-alanine ligase.